We begin with the raw amino-acid sequence, 522 residues long: Kelch domain-containing protein 4 (522 aa).

Over residues M1–K10 the composition is skewed to basic residues. The tract at residues M1–E33 is disordered. Over residues G11–K24 the composition is skewed to basic and acidic residues. Kelch repeat units follow at residues E77–Q129, Q133–R187, Q188–Q241, G243–S289, and Q308–R361. 3 disordered regions span residues Q346 to T378, L402 to R432, and D481 to D522. Phosphoserine occurs at positions 413 and 418. A Kelch 6 repeat occupies V443 to E494.

The sequence is that of Kelch domain-containing protein 4 (KLHDC4) from Pongo abelii (Sumatran orangutan).